We begin with the raw amino-acid sequence, 500 residues long: Lysine--tRNA ligase (500 aa).

Residues glutamate 410 and glutamate 417 each coordinate Mg(2+).

It belongs to the class-II aminoacyl-tRNA synthetase family. Homodimer. It depends on Mg(2+) as a cofactor.

Its subcellular location is the cytoplasm. The enzyme catalyses tRNA(Lys) + L-lysine + ATP = L-lysyl-tRNA(Lys) + AMP + diphosphate. This Mycoplasma capricolum subsp. capricolum (strain California kid / ATCC 27343 / NCTC 10154) protein is Lysine--tRNA ligase.